The primary structure comprises 142 residues: Prefoldin subunit alpha 1 (142 aa).

It belongs to the prefoldin subunit alpha family. In terms of assembly, heterohexamer of two alpha and four beta subunits.

Its subcellular location is the cytoplasm. Functionally, molecular chaperone capable of stabilizing a range of proteins. Seems to fulfill an ATP-independent, HSP70-like function in archaeal de novo protein folding. The sequence is that of Prefoldin subunit alpha 1 (pfdA1) from Methanocaldococcus jannaschii (strain ATCC 43067 / DSM 2661 / JAL-1 / JCM 10045 / NBRC 100440) (Methanococcus jannaschii).